A 555-amino-acid chain; its full sequence is Natural resistance-associated macrophage protein 1 (555 aa).

At methionine 1–leucine 63 the chain is on the cytoplasmic side. Residues tryptophan 64 to glycine 81 traverse the membrane as a helical segment. Residues asparagine 82 to glycine 90 are Extracellular-facing. The helical transmembrane segment at alanine 91–leucine 110 threads the bilayer. Residues cysteine 111 to glutamate 147 are Cytoplasmic-facing. The helical transmembrane segment at isoleucine 148–leucine 168 threads the bilayer. Residues serine 169–arginine 172 lie on the Extracellular side of the membrane. A helical membrane pass occupies residues isoleucine 173 to leucine 192. Residues aspartate 193–glutamate 201 are Cytoplasmic-facing. A helical transmembrane segment spans residues alanine 202–valine 222. The Extracellular portion of the chain corresponds to arginine 223–glutamate 245. A helical transmembrane segment spans residues leucine 246–leucine 264. Over histidine 265–glutamate 292 the chain is Cytoplasmic. The helical transmembrane segment at serine 293–glycine 312 threads the bilayer. Residues glutamate 313–glycine 354 are Extracellular-facing. N-linked (GlcNAc...) asparagine glycosylation is found at asparagine 329 and asparagine 343. Residues valine 355–leucine 374 traverse the membrane as a helical segment. At alanine 375–arginine 405 the chain is on the cytoplasmic side. Residues valine 406–phenylalanine 423 form a helical membrane-spanning segment. The Extracellular portion of the chain corresponds to arginine 424 to aspartate 434. Residues leucine 435–threonine 455 traverse the membrane as a helical segment. Residues serine 456 to glutamine 471 lie on the Cytoplasmic side of the membrane. A helical membrane pass occupies residues valine 472 to leucine 493. Residues proline 494–tyrosine 501 are Extracellular-facing. Residues leucine 502–tryptophan 521 traverse the membrane as a helical segment. The Cytoplasmic portion of the chain corresponds to threonine 522–histidine 555.

The protein belongs to the NRAMP family. As to expression, macrophages; spleen and thymus and at lower level in liver and lung.

The protein localises to the late endosome membrane. It localises to the lysosome membrane. It carries out the reaction Zn(2+)(in) + H(+)(out) = Zn(2+)(out) + H(+)(in). The catalysed reaction is Fe(2+)(in) + H(+)(out) = Fe(2+)(out) + H(+)(in). The enzyme catalyses Mn(2+)(in) + H(+)(out) = Mn(2+)(out) + H(+)(in). Macrophage-specific antiporter that fluxes metal ions in either direction against a proton gradient. Localized to late endosomal lysosomal membranes, delivers bivalent cations from the cytosol into these acidic compartments where they may directly affect antimicrobial activity. Involved in iron metabolism and host natural resistance to infection with intracellular parasites. Pathogen resistance involves sequestration of Fe(2+) and Mn(2+), cofactors of both prokaryotic and eukaryotic catalases and superoxide dismutases, not only to protect the macrophage against its own generation of reactive oxygen species, but to deny the cations to the pathogen for synthesis of its protective enzymes. In Gallus gallus (Chicken), this protein is Natural resistance-associated macrophage protein 1 (SLC11A1).